A 392-amino-acid chain; its full sequence is F-box protein At5g65850 (392 aa).

An F-box domain is found at 29-78 (TEKSVQIPVDIIIEILLRLPAKSIATCRCVSKLWISVICRQDFTELFLTR).

The protein is F-box protein At5g65850 of Arabidopsis thaliana (Mouse-ear cress).